We begin with the raw amino-acid sequence, 769 residues long: Serine protease HtrA-like (769 aa).

The segment covering 1–20 (MDIGKKHVIPKSQYRRKRRE) has biased composition (basic residues). Disordered stretches follow at residues 1 to 287 (MDIG…DKDN) and 324 to 390 (EDKH…KGRA). Basic and acidic residues-rich tracts occupy residues 21-64 (FFHN…ERFK) and 71-108 (LEQRNRDVNENKAEESKSNQDSKSAYNRDHYLTDDVSK). Residues 126 to 137 (YEQNSEATLSTK) show a composition bias toward polar residues. Basic and acidic residues predominate over residues 138–186 (STDKVESTEMRKLSSDKNKVGHEEQHVLSKPSEHDKETRIDSESSRTDS). Over residues 247–262 (QQSQNEQTKTYTYGDS) the composition is skewed to polar residues. The span at 264–287 (QNDKSNHENDLSHHTPSISDDKDN) shows a compositional bias: basic and acidic residues. Polar residues predominate over residues 331 to 347 (ADSSETVGYQSQSTASH). The span at 348–364 (RSTEKRNISINDHDKLN) shows a compositional bias: basic and acidic residues. Over residues 365 to 390 (GQKTNTKTSANNNQKKATSKLNKGRA) the composition is skewed to polar residues. The chain crosses the membrane as a helical span at residues 410–430 (LVILMGIIILIVILNAIFNNV). Catalysis depends on charge relay system residues His504, Asp534, and Ser619. The 54-residue stretch at 680 to 733 (IASLNSFERQAVKLPGKVKNGVVVDQVDNNGLADQSGLKKGDVITELDGKLLED) folds into the PDZ domain.

It belongs to the peptidase S1C family.

It is found in the cell membrane. The polypeptide is Serine protease HtrA-like (Staphylococcus aureus (strain N315)).